A 70-amino-acid chain; its full sequence is Protein SlyX homolog (70 aa).

The protein belongs to the SlyX family.

This is Protein SlyX homolog from Shewanella sp. (strain MR-7).